A 301-amino-acid chain; its full sequence is Probable alpha-L-glutamate ligase (301 aa).

Residues 104-287 (LQLMSRKGLG…VASMIIKHIE (184 aa)) enclose the ATP-grasp domain. ATP contacts are provided by residues lysine 141, 178–179 (EY), aspartate 187, and 211–213 (RSN). Aspartate 248, glutamate 260, and asparagine 262 together coordinate Mg(2+). The Mn(2+) site is built by aspartate 248, glutamate 260, and asparagine 262.

Belongs to the RimK family. Requires Mg(2+) as cofactor. Mn(2+) serves as cofactor.

This Marinomonas sp. (strain MWYL1) protein is Probable alpha-L-glutamate ligase.